The primary structure comprises 172 residues: MPYPKSMVEPMRKELTRLGIDELKSPDDVDAAFGAAEDETLLLIINSVCGCAAGGARPAVAQALETGPTPDHAVTVFAGQDVAATDYVRDTHLPGIPPSSPFMALFRNGQPVYVIERKHIEGREPAAISADLVEALQAYCTDEAPPSDAPSRPDLSSSPNAGGLPSTFQSIS.

Positions 141 to 172 are disordered; the sequence is TDEAPPSDAPSRPDLSSSPNAGGLPSTFQSIS. Polar residues predominate over residues 154–172; it reads DLSSSPNAGGLPSTFQSIS.

The protein belongs to the bacilliredoxin family.

This Salinibacter ruber (strain DSM 13855 / M31) protein is Bacilliredoxin SRU_0242.